The following is a 777-amino-acid chain: Rho guanine nucleotide exchange factor 38 (777 aa).

A Phosphothreonine modification is found at Thr-34. The segment at 35–72 (DTVVESSVSGDHSGTLRRSQSDRTEYNQKLQEKMTPQG) is disordered. The span at 37–52 (VVESSVSGDHSGTLRR) shows a compositional bias: polar residues. The span at 53–66 (SQSDRTEYNQKLQE) shows a compositional bias: basic and acidic residues. Residues 94 to 285 (KREKIIKELI…KDINVNINEL (192 aa)) form the DH domain. A BAR domain is found at 327-536 (LKILTRGESQ…QNQVLEEIQN (210 aa)). In terms of domain architecture, SH3 1 spans 582–645 (SAEELYQAKR…YSSFLKPYNP (64 aa)). The disordered stretch occupies residues 673-694 (PASDSVTGTSESSIGDSSSSLS). Low complexity predominate over residues 679–694 (TGTSESSIGDSSSSLS). The SH3 2 domain maps to 713-776 (VDEQIFYAVH…PANYLGKMTY (64 aa)).

May act as a guanine-nucleotide releasing factor. The polypeptide is Rho guanine nucleotide exchange factor 38 (ARHGEF38) (Homo sapiens (Human)).